The chain runs to 170 residues: Cathelicidin antimicrobial peptide (170 aa).

A signal peptide spans M1 to A30. Positions Q31–R131 are cleaved as a propeptide — cathelin-like domain (CLD). Disulfide bonds link C86–C97 and C108–C125. An active core region spans residues L150–G162.

It belongs to the cathelicidin family. In terms of assembly, monomer, homodimer or homotrimer (in vitro). Oligomerizes as tetra- or hexamer in solution (in vitro). Post-translationally, proteolytically cleaved by proteinase PRTN3 into antibacterial peptide LL-37. Proteolytically cleaved by cathepsin CTSG and neutrophil elastase ELANE. Resistant to proteolytic degradation in solution, and when bound to both zwitterionic (mimicking mammalian membranes) and negatively charged membranes (mimicking bacterial membranes). In terms of processing, after secretion onto the skin surface, the CAMP gene product is processed by a serine protease-dependent mechanism into multiple novel antimicrobial peptides distinct from and shorter than cathelicidin LL-37. These peptides show enhanced antimicrobial action, acquiring the ability to kill skin pathogens such as S.aureus, E.coli and C.albicans. These peptides have lost the ability to stimulate CXCL8/IL8 release from keratinocytes. The peptides act synergistically, killing bacteria at lower concentrations when present together, and maintain activity at increased salt condition.

The protein resides in the secreted. It localises to the vesicle. Functionally, antimicrobial protein that is an integral component of the innate immune system. Binds to bacterial lipopolysaccharides (LPS). Acts via neutrophil N-formyl peptide receptors to enhance the release of CXCL2. Postsecretory processing generates multiple cathelicidin antimicrobial peptides with various lengths which act as a topical antimicrobial defense in sweat on skin. The unprocessed precursor form, cathelicidin antimicrobial peptide, inhibits the growth of Gram-negative E.coli and E.aerogenes with efficiencies comparable to that of the mature peptide LL-37 (in vitro). Its function is as follows. Antimicrobial peptide that is an integral component of the innate immune system. Binds to bacterial lipopolysaccharides (LPS). Causes membrane permeabilization by forming transmembrane pores (in vitro). Causes lysis of E.coli. Exhibits antimicrobial activity against Gram-negative bacteria such as P.aeruginosa, S.typhimurium, E.aerogenes, E.coli and P.syringae, Gram-positive bacteria such as L.monocytogenes, S.epidermidis, S.pyogenes and S.aureus, as well as vancomycin-resistant enterococci (in vitro). Exhibits antimicrobial activity against methicillin-resistant S.aureus, P.mirabilis, and C.albicans in low-salt media, but not in media containing 100 mM NaCl (in vitro). Forms chiral supramolecular assemblies with quinolone signal (PQS) molecules of P.aeruginosa, which may lead to interference of bacterial quorum signaling and perturbance of bacterial biofilm formation. May form supramolecular fiber-like assemblies on bacterial membranes. Induces cytokine and chemokine producation as well as TNF/TNFA and CSF2/GMCSF production in normal human keratinocytes. Exhibits hemolytic activity against red blood cells. Exhibits antimicrobial activity against E.coli and B.megaterium (in vitro). This Trachypithecus obscurus (Dusky leaf-monkey) protein is Cathelicidin antimicrobial peptide.